The chain runs to 37 residues: Large ribosomal subunit protein bL36 (37 aa).

It belongs to the bacterial ribosomal protein bL36 family.

The sequence is that of Large ribosomal subunit protein bL36 from Methylibium petroleiphilum (strain ATCC BAA-1232 / LMG 22953 / PM1).